Reading from the N-terminus, the 138-residue chain is Thyrotropin subunit beta (138 aa).

A signal peptide spans 1–20; the sequence is MTAIFLMSVLFGLACGQAMS. Cystine bridges form between C22-C72, C36-C87, C39-C125, C47-C103, C51-C105, and C108-C115. N43 carries N-linked (GlcNAc...) asparagine glycosylation. Residues 133-138 constitute a propeptide that is removed on maturation; that stretch reads VVGLSI.

The protein belongs to the glycoprotein hormones subunit beta family. As to quaternary structure, heterodimer of a common alpha chain and a unique beta chain which confers biological specificity to thyrotropin, lutropin, follitropin and gonadotropin.

It is found in the secreted. In terms of biological role, indispensable for the control of thyroid structure and metabolism. The polypeptide is Thyrotropin subunit beta (TSHB) (Lama glama (Llama)).